Consider the following 402-residue polypeptide: N-acetyllactosaminide beta-1,6-N-acetylglucosaminyl-transferase (402 aa).

Residues 1–7 are Cytoplasmic-facing; it reads MMGSWKH. Residues 8–23 traverse the membrane as a helical; Signal-anchor for type II membrane protein segment; it reads CLFSASLISALIFVFV. The Lumenal segment spans residues 24-400; the sequence is YNTELWENKR…QSETAIQPSW (377 aa). Asparagine 41 carries N-linked (GlcNAc...) asparagine glycosylation.

It belongs to the glycosyltransferase 14 family. Expressed in lens epithelium cells. As to expression, expressed in reticulocytes.

The protein localises to the golgi apparatus membrane. It carries out the reaction a beta-D-Gal-(1-&gt;4)-beta-D-GlcNAc-(1-&gt;3)-beta-D-Gal-(1-&gt;4)-beta-D-GlcNAc derivative + UDP-N-acetyl-alpha-D-glucosamine = a beta-D-Gal-(1-&gt;4)-beta-D-GlcNAc-(1-&gt;3)-[beta-D-GlcNAc-(1-&gt;6)]-beta-D-Gal-(1-&gt;4)-N-acetyl-beta-D-glucosaminyl derivative + UDP + H(+). The protein operates within protein modification; protein glycosylation. In terms of biological role, branching enzyme that converts linear into branched poly-N-acetyllactosaminoglycans. Introduces the blood group I antigen during embryonic development. It is closely associated with the development and maturation of erythroid cells. Functionally, determines the expression of the blood group I antigen in erythrocytes. The chain is N-acetyllactosaminide beta-1,6-N-acetylglucosaminyl-transferase (GCNT2) from Homo sapiens (Human).